The primary structure comprises 230 residues: Maleylacetoacetate isomerase (230 aa).

The GST N-terminal domain maps to 7 to 95 (LRVTLYTYFR…YLDEAFPDNP (89 aa)). Residues 17–22 (SSCSAR), Gln-46, Val-60, 79–80 (QS), Gln-123, and 127–129 (NLR) each bind glutathione. Residues 104–226 (NPQQRALVRS…HWRTQQDTPT (123 aa)) enclose the GST C-terminal domain.

The protein belongs to the GST superfamily. Zeta family. It depends on glutathione as a cofactor.

It localises to the cytoplasm. The catalysed reaction is 4-maleylacetoacetate = 4-fumarylacetoacetate. It functions in the pathway amino-acid degradation; L-phenylalanine degradation; acetoacetate and fumarate from L-phenylalanine: step 5/6. This chain is Maleylacetoacetate isomerase (maiA), found in Emericella nidulans (strain FGSC A4 / ATCC 38163 / CBS 112.46 / NRRL 194 / M139) (Aspergillus nidulans).